The following is a 465-amino-acid chain: VGFKAGVKDYKLTYYTPDYETKDTDILAAFRVTPQPGVPPEEAGAAVAAESSTGTWTTVWTDGLTSLDRYKGRCYHIEPVAGEENQFIAYVAYPLDLFEEGSVTNMFTSIVGNVFGFKALRALRLEDLRIPPAYVKTFQGPPHGIQVERDKLNKYGRPLLGCTIKPKLGLSAKNYGRAVYECLRGGLDFTKDDENVNSQPFMRWRDRFLFCAEALYKAQAETGEIKGHYLNATAGTCEEMIKRAVFARELGVPIVMHDYLTGGFTANTSLAHYCRDNGLLLHIHRAMHAVIDRQKNHGIHFRVLAKALRMSGGDHIHSGTVVGKLEGEREITLGFVDLLRDDFIEKDRSRGIYFTQDWVSLPGVLPVASGGIHVWHMPALTEIFGDDSVLQFGGGTLGHPWGNAPGAVANRVALEACVQARNEGRDLAREGNEIIREASKWSPELAAACEVWKEIKFEFEAMDTL.

Lys-4 is modified (N6,N6,N6-trimethyllysine). Substrate-binding residues include Asn-113 and Thr-163. Catalysis depends on Lys-165, which acts as the Proton acceptor. Position 167 (Lys-167) interacts with substrate. Mg(2+) is bound by residues Lys-191, Asp-193, and Glu-194. The residue at position 191 (Lys-191) is an N6-carboxylysine. The Proton acceptor role is filled by His-284. Substrate contacts are provided by Arg-285, His-317, and Ser-369.

Belongs to the RuBisCO large chain family. Type I subfamily. Heterohexadecamer of 8 large chains and 8 small chains; disulfide-linked. The disulfide link is formed within the large subunit homodimers. Mg(2+) is required as a cofactor. The disulfide bond which can form in the large chain dimeric partners within the hexadecamer appears to be associated with oxidative stress and protein turnover.

Its subcellular location is the plastid. It is found in the chloroplast. It carries out the reaction 2 (2R)-3-phosphoglycerate + 2 H(+) = D-ribulose 1,5-bisphosphate + CO2 + H2O. It catalyses the reaction D-ribulose 1,5-bisphosphate + O2 = 2-phosphoglycolate + (2R)-3-phosphoglycerate + 2 H(+). RuBisCO catalyzes two reactions: the carboxylation of D-ribulose 1,5-bisphosphate, the primary event in carbon dioxide fixation, as well as the oxidative fragmentation of the pentose substrate in the photorespiration process. Both reactions occur simultaneously and in competition at the same active site. The polypeptide is Ribulose bisphosphate carboxylase large chain (Platytheca verticillata).